The primary structure comprises 457 residues: Oxygen-independent coproporphyrinogen III oxidase (457 aa).

Positions 47 to 279 (LKNPMPLSLY…EILESLISFL (233 aa)) constitute a Radical SAM core domain. Y56 provides a ligand contact to S-adenosyl-L-methionine. Residues C62 and C66 each coordinate [4Fe-4S] cluster. S-adenosyl-L-methionine is bound at residue F68. C69 contributes to the [4Fe-4S] cluster binding site. S-adenosyl-L-methionine contacts are provided by residues G113, 114–115 (GT), E147, Q174, R186, D211, A245, and I331.

The protein belongs to the anaerobic coproporphyrinogen-III oxidase family. Monomer. The cofactor is [4Fe-4S] cluster.

It is found in the cytoplasm. It carries out the reaction coproporphyrinogen III + 2 S-adenosyl-L-methionine = protoporphyrinogen IX + 2 5'-deoxyadenosine + 2 L-methionine + 2 CO2. It functions in the pathway porphyrin-containing compound metabolism; protoporphyrin-IX biosynthesis; protoporphyrinogen-IX from coproporphyrinogen-III (AdoMet route): step 1/1. Involved in the heme biosynthesis. Catalyzes the anaerobic oxidative decarboxylation of propionate groups of rings A and B of coproporphyrinogen III to yield the vinyl groups in protoporphyrinogen IX. In Helicobacter pylori (strain ATCC 700392 / 26695) (Campylobacter pylori), this protein is Oxygen-independent coproporphyrinogen III oxidase (hemN).